We begin with the raw amino-acid sequence, 524 residues long: Cytokinin dehydrogenase 7 (524 aa).

A signal peptide spans 1-22 (MAARCSIAFMIMASCLSVVVSG). An N-linked (GlcNAc...) asparagine glycan is attached at Asn42. The region spanning 55 to 233 (VAAAPEAVLH…TRARIGLMPA (179 aa)) is the FAD-binding PCMH-type domain. Residues Gly91 and Gly93 each contribute to the FAD site. Pros-8alpha-FAD histidine is present on His94. Ser95 and Gln99 together coordinate FAD. The N-linked (GlcNAc...) asparagine glycan is linked to Asn121. Asp157, Thr162, Ser168, Ile172, and Ile223 together coordinate FAD. Asn277 and Asn320 each carry an N-linked (GlcNAc...) asparagine glycan. Tyr472, Ser507, and Gln510 together coordinate FAD.

The protein belongs to the oxygen-dependent FAD-linked oxidoreductase family. Monomer. Requires FAD as cofactor.

It localises to the secreted. Its subcellular location is the extracellular space. The catalysed reaction is N(6)-dimethylallyladenine + A + H2O = 3-methyl-2-butenal + adenine + AH2. Its function is as follows. Catalyzes the oxidation of cytokinins, a family of N(6)-substituted adenine derivatives that are plant hormones, where the substituent is an isopentenyl group. This Oryza sativa subsp. japonica (Rice) protein is Cytokinin dehydrogenase 7 (CKX7).